The following is a 306-amino-acid chain: GTPase Era (306 aa).

Positions 13-181 (YCGFIAIVGR…EKIVRESLHE (169 aa)) constitute an Era-type G domain. The interval 21 to 28 (GRPNVGKS) is G1. 21 to 28 (GRPNVGKS) serves as a coordination point for GTP. Positions 47-51 (QTTRH) are G2. The segment at 68–71 (DTPG) is G3. GTP contacts are provided by residues 68–72 (DTPGL) and 130–133 (NKID). Positions 130-133 (NKID) are G4. The segment at 160 to 162 (ISA) is G5. Positions 212–289 (TGDELPYSVT…HLELWVKVKS (78 aa)) constitute a KH type-2 domain.

The protein belongs to the TRAFAC class TrmE-Era-EngA-EngB-Septin-like GTPase superfamily. Era GTPase family. In terms of assembly, monomer.

It localises to the cytoplasm. The protein resides in the cell inner membrane. In terms of biological role, an essential GTPase that binds both GDP and GTP, with rapid nucleotide exchange. Plays a role in 16S rRNA processing and 30S ribosomal subunit biogenesis and possibly also in cell cycle regulation and energy metabolism. In Pasteurella multocida (strain Pm70), this protein is GTPase Era.